A 215-amino-acid polypeptide reads, in one-letter code: 3-isopropylmalate dehydratase small subunit (215 aa).

This sequence belongs to the LeuD family. LeuD type 1 subfamily. As to quaternary structure, heterodimer of LeuC and LeuD.

The enzyme catalyses (2R,3S)-3-isopropylmalate = (2S)-2-isopropylmalate. The protein operates within amino-acid biosynthesis; L-leucine biosynthesis; L-leucine from 3-methyl-2-oxobutanoate: step 2/4. In terms of biological role, catalyzes the isomerization between 2-isopropylmalate and 3-isopropylmalate, via the formation of 2-isopropylmaleate. The chain is 3-isopropylmalate dehydratase small subunit from Xanthomonas campestris pv. campestris (strain 8004).